Reading from the N-terminus, the 157-residue chain is SsrA-binding protein (157 aa).

The segment covering 136–151 has biased composition (basic and acidic residues); the sequence is KRETSAKRDWSREKQR. The disordered stretch occupies residues 136-157; it reads KRETSAKRDWSREKQRLLKQNS.

It belongs to the SmpB family.

It is found in the cytoplasm. Functionally, required for rescue of stalled ribosomes mediated by trans-translation. Binds to transfer-messenger RNA (tmRNA), required for stable association of tmRNA with ribosomes. tmRNA and SmpB together mimic tRNA shape, replacing the anticodon stem-loop with SmpB. tmRNA is encoded by the ssrA gene; the 2 termini fold to resemble tRNA(Ala) and it encodes a 'tag peptide', a short internal open reading frame. During trans-translation Ala-aminoacylated tmRNA acts like a tRNA, entering the A-site of stalled ribosomes, displacing the stalled mRNA. The ribosome then switches to translate the ORF on the tmRNA; the nascent peptide is terminated with the 'tag peptide' encoded by the tmRNA and targeted for degradation. The ribosome is freed to recommence translation, which seems to be the essential function of trans-translation. In Cereibacter sphaeroides (strain ATCC 17029 / ATH 2.4.9) (Rhodobacter sphaeroides), this protein is SsrA-binding protein.